The sequence spans 463 residues: Kynurenine 3-monooxygenase (463 aa).

This sequence belongs to the aromatic-ring hydroxylase family. KMO subfamily. FAD is required as a cofactor.

It is found in the mitochondrion outer membrane. The catalysed reaction is L-kynurenine + NADPH + O2 + H(+) = 3-hydroxy-L-kynurenine + NADP(+) + H2O. It functions in the pathway cofactor biosynthesis; NAD(+) biosynthesis; quinolinate from L-kynurenine: step 1/3. Functionally, catalyzes the hydroxylation of L-kynurenine (L-Kyn) to form 3-hydroxy-L-kynurenine (L-3OHKyn). Required for synthesis of quinolinic acid. This Yarrowia lipolytica (strain CLIB 122 / E 150) (Yeast) protein is Kynurenine 3-monooxygenase.